The chain runs to 86 residues: Beta-toxin CsEI (86 aa).

The first 19 residues, 1-19 (MNSLLMITACLVLIGTVWA), serve as a signal peptide directing secretion. Residues 20 to 84 (KDGYLVEKTG…TWPLPNKTCG (65 aa)) enclose the LCN-type CS-alpha/beta domain. 4 disulfide bridges follow: Cys-30-Cys-83, Cys-34-Cys-59, Cys-43-Cys-64, and Cys-47-Cys-66. A Cysteine amide modification is found at Cys-83.

Belongs to the long (4 C-C) scorpion toxin superfamily. Sodium channel inhibitor family. Beta subfamily. In terms of tissue distribution, expressed by the venom gland.

Its subcellular location is the secreted. In terms of biological role, beta toxins bind voltage-independently at site-4 of sodium channels (Nav) and shift the voltage of activation toward more negative potentials thereby affecting sodium channel activation and promoting spontaneous and repetitive firing. Affects channels from chicken and frog. The protein is Beta-toxin CsEI of Centruroides sculpturatus (Arizona bark scorpion).